Reading from the N-terminus, the 130-residue chain is Small ribosomal subunit protein uS9 (130 aa).

This sequence belongs to the universal ribosomal protein uS9 family.

The protein is Small ribosomal subunit protein uS9 of Geobacillus sp. (strain WCH70).